The following is a 356-amino-acid chain: Glutamine synthetase (356 aa).

Residues 19–99 (VIAEYIWIGG…VICDTYTPAG (81 aa)) enclose the GS beta-grasp domain. A GS catalytic domain is found at 106-356 (KRHGAAKIFS…IAETTLLWKP (251 aa)).

Belongs to the glutamine synthetase family. In terms of assembly, homooctamer. As to expression, found at highest levels in root nodules.

It is found in the cytoplasm. It carries out the reaction L-glutamate + NH4(+) + ATP = L-glutamine + ADP + phosphate + H(+). The protein is Glutamine synthetase (GLN1) of Alnus glutinosa (European alder).